The primary structure comprises 635 residues: Threonine--tRNA ligase (635 aa).

The 61-residue stretch at 1–61 folds into the TGS domain; sequence MINISFPDGS…DNDCKLRILT (61 aa). Residues 242–533 are catalytic; the sequence is DHRKLGRELD…LIEEYAGRFP (292 aa). Zn(2+) contacts are provided by cysteine 333, histidine 384, and histidine 510.

It belongs to the class-II aminoacyl-tRNA synthetase family. Homodimer. Requires Zn(2+) as cofactor.

It is found in the cytoplasm. The catalysed reaction is tRNA(Thr) + L-threonine + ATP = L-threonyl-tRNA(Thr) + AMP + diphosphate + H(+). In terms of biological role, catalyzes the attachment of threonine to tRNA(Thr) in a two-step reaction: L-threonine is first activated by ATP to form Thr-AMP and then transferred to the acceptor end of tRNA(Thr). Also edits incorrectly charged L-seryl-tRNA(Thr). In Rickettsia conorii (strain ATCC VR-613 / Malish 7), this protein is Threonine--tRNA ligase.